Here is a 421-residue protein sequence, read N- to C-terminus: UPF0229 protein lpp2857 (421 aa).

A disordered region spans residues 83–110 (IAGDRIKRPSGGGAGGAGGNASDSGEGE). Residues 92 to 101 (SGGGAGGAGG) are compositionally biased toward gly residues.

It belongs to the UPF0229 family.

This chain is UPF0229 protein lpp2857, found in Legionella pneumophila (strain Paris).